A 189-amino-acid chain; its full sequence is CASP-like protein 1F2 (189 aa).

The Cytoplasmic segment spans residues 1-27 (MESLEVANGKSSALGVSREASSPPQMG). A helical membrane pass occupies residues 28–48 (FFIAQVVLRFFTLAFTGAAIA). The Extracellular portion of the chain corresponds to 49–77 (VMVTAKETVEVFSISFTVRYSYLSAFKFL). A helical membrane pass occupies residues 78–98 (VGADAVVCGFSMLSLIFVSIF). The Cytoplasmic portion of the chain corresponds to 99–113 (NKGKSNHYFFLYFHD). Residues 114-134 (LILMVLSMSACAAATAVGYVG) form a helical membrane-spanning segment. Over 135 to 156 (RYGQDKAAWMAVCGNVKMFCDK) the chain is Extracellular. A helical transmembrane segment spans residues 157–177 (ALASILLSLIGFICLFLLTIM). Residues 178–189 (AARNLRVSGHLI) lie on the Cytoplasmic side of the membrane.

Belongs to the Casparian strip membrane proteins (CASP) family. In terms of assembly, homodimer and heterodimers.

The protein localises to the cell membrane. This is CASP-like protein 1F2 from Vitis vinifera (Grape).